A 202-amino-acid chain; its full sequence is LexA repressor (202 aa).

Positions 28 to 48 (RAEIAQRLGFRSPNAAEEHLK) form a DNA-binding region, H-T-H motif. Residues Ser-119 and Lys-156 each act as for autocatalytic cleavage activity in the active site.

It belongs to the peptidase S24 family. Homodimer.

It catalyses the reaction Hydrolysis of Ala-|-Gly bond in repressor LexA.. Functionally, represses a number of genes involved in the response to DNA damage (SOS response), including recA and lexA. Binds to the 16 bp palindromic sequence 5'-CTGTATATATATACAG-3'. In the presence of single-stranded DNA, RecA interacts with LexA causing an autocatalytic cleavage which disrupts the DNA-binding part of LexA, leading to derepression of the SOS regulon and eventually DNA repair. This chain is LexA repressor, found in Escherichia coli (strain K12 / MC4100 / BW2952).